An 80-amino-acid chain; its full sequence is Metallothionein-like protein BIF98 (80 aa).

This sequence belongs to the metallothionein superfamily. Type 15 family.

In terms of biological role, metallothioneins have a high content of cysteine residues that bind various heavy metals. This is Metallothionein-like protein BIF98 from Brassica rapa subsp. pekinensis (Chinese cabbage).